A 147-amino-acid polypeptide reads, in one-letter code: Ribonuclease pancreatic gamma-type (147 aa).

The first 25 residues, 1–25 (MGLEKSFLLFSLLVLVLGWVQPSLG), serve as a signal peptide directing secretion. Positions 35 and 38 each coordinate substrate. Residue histidine 40 is the Proton acceptor of the active site. Intrachain disulfides connect cysteine 54/cysteine 112, cysteine 68/cysteine 123, cysteine 86/cysteine 138, and cysteine 93/cysteine 100. Residues 69–73 (KPMNT), lysine 94, and arginine 113 each bind substrate. The active-site Proton donor is histidine 142.

It belongs to the pancreatic ribonuclease family. As to quaternary structure, monomer.

Its subcellular location is the secreted. The catalysed reaction is an [RNA] containing cytidine + H2O = an [RNA]-3'-cytidine-3'-phosphate + a 5'-hydroxy-ribonucleotide-3'-[RNA].. It carries out the reaction an [RNA] containing uridine + H2O = an [RNA]-3'-uridine-3'-phosphate + a 5'-hydroxy-ribonucleotide-3'-[RNA].. Endonuclease that catalyzes the cleavage of RNA on the 3' side of pyrimidine nucleotides. Acts on single-stranded and double-stranded RNA. This chain is Ribonuclease pancreatic gamma-type, found in Rattus rattus (Black rat).